The following is a 79-amino-acid chain: Dolichyl-diphosphooligosaccharide--protein glycosyltransferase subunit TMEM258 (79 aa).

The residue at position 1 (Met1) is an N-acetylmethionine. The Lumenal segment spans residues 1–16 (MELEAMSRYTSPVNPA). Residues 17 to 37 (VFPHLTVVLLAIGMFFTAWFF) traverse the membrane as a helical segment. At 38–54 (VYEVTSTKYTRDICKEL) the chain is on the cytoplasmic side. A helical transmembrane segment spans residues 55–75 (LISLVASLFMGFGVLFLLLWV). The Lumenal segment spans residues 76-79 (GIYV).

Belongs to the OST5 family. As to quaternary structure, component of the oligosaccharyltransferase (OST) complex. OST exists in two different complex forms which contain common core subunits RPN1, RPN2, OST48, OST4, DAD1 and TMEM258, either STT3A or STT3B as catalytic subunits, and form-specific accessory subunits. STT3A complex assembly occurs through the formation of 3 subcomplexes. Subcomplex 1 contains RPN1 and TMEM258, subcomplex 2 contains the STT3A-specific subunits STT3A, DC2/OSTC, and KCP2 as well as the core subunit OST4, and subcomplex 3 contains RPN2, DAD1, and OST48. The STT3A complex can form stable complexes with the Sec61 complex or with both the Sec61 and TRAP complexes.

It localises to the membrane. The protein resides in the endoplasmic reticulum. It is found in the cytoplasm. It functions in the pathway protein modification; protein glycosylation. Functionally, subunit of the oligosaccharyl transferase (OST) complex that catalyzes the initial transfer of a defined glycan (Glc(3)Man(9)GlcNAc(2) in eukaryotes) from the lipid carrier dolichol-pyrophosphate to an asparagine residue within an Asn-X-Ser/Thr consensus motif in nascent polypeptide chains, the first step in protein N-glycosylation. N-glycosylation occurs cotranslationally and the complex associates with the Sec61 complex at the channel-forming translocon complex that mediates protein translocation across the endoplasmic reticulum (ER). All subunits are required for a maximal enzyme activity. In Canis lupus familiaris (Dog), this protein is Dolichyl-diphosphooligosaccharide--protein glycosyltransferase subunit TMEM258.